A 453-amino-acid polypeptide reads, in one-letter code: Ribulose bisphosphate carboxylase large chain (453 aa).

Positions 1–2 (MS) are excised as a propeptide. Residue Pro-3 is modified to N-acetylproline. Position 14 is an N6,N6,N6-trimethyllysine (Lys-14). Asn-123 and Thr-173 together coordinate substrate. Residue Lys-175 is the Proton acceptor of the active site. Position 177 (Lys-177) interacts with substrate. Mg(2+) contacts are provided by Lys-201, Asp-203, and Glu-204. Lys-201 carries the N6-carboxylysine modification. Residue His-294 is the Proton acceptor of the active site. Residues Arg-295, His-327, and Ser-379 each coordinate substrate.

It belongs to the RuBisCO large chain family. Type I subfamily. In terms of assembly, heterohexadecamer of 8 large chains and 8 small chains; disulfide-linked. The disulfide link is formed within the large subunit homodimers. Requires Mg(2+) as cofactor. The disulfide bond which can form in the large chain dimeric partners within the hexadecamer appears to be associated with oxidative stress and protein turnover.

It localises to the plastid. It is found in the chloroplast. It catalyses the reaction 2 (2R)-3-phosphoglycerate + 2 H(+) = D-ribulose 1,5-bisphosphate + CO2 + H2O. The catalysed reaction is D-ribulose 1,5-bisphosphate + O2 = 2-phosphoglycolate + (2R)-3-phosphoglycerate + 2 H(+). In terms of biological role, ruBisCO catalyzes two reactions: the carboxylation of D-ribulose 1,5-bisphosphate, the primary event in carbon dioxide fixation, as well as the oxidative fragmentation of the pentose substrate in the photorespiration process. Both reactions occur simultaneously and in competition at the same active site. The protein is Ribulose bisphosphate carboxylase large chain of Galium parisiense (Wall bedstraw).